Here is a 484-residue protein sequence, read N- to C-terminus: Ankyrin repeat protein T5 (484 aa).

ANK repeat units follow at residues 33–64, 68–102, 106–138, 142–173, 178–211, 251–280, and 284–313; these read MDDT…DVNG, TRTS…DVNA, DGRY…LVCV, DGCG…SIHD, YGFN…NSSQ, LDFT…NPNV, and LGNS…TPDA.

The protein is Ankyrin repeat protein T5 of Rabbit fibroma virus (strain Kasza) (RFV).